Reading from the N-terminus, the 343-residue chain is MVTMTTQTDYSDISMTVLGAGSYGTSLAISLARNGAKVILWGHEEAHMNRLEADRANEEFLPGVAFPPSLIMSTDLEKSVQASRDLLVVVPSHVFGLVLGNVKPFLRDDSRICWATKGLEPETGRLLKEVAVEALGESHSLAVLSGPTFAKELASGMPTAIAVASPDKEFVKDLQEKIHCSKTFRVYANNDFTGMQLGGAVKNVIAIGAGMSDGIGFGANARTALITRGLAEMTRLGVALGAEAETFMGMAGLGDLVLTCTDNQSRNRRFGLALGQGGDVDSAQEEIGQVVEGYRNTKEVWLLANRMGVEMPIVEQIYQVLYQGKDARVAAQDLLARDKKSES.

4 residues coordinate NADPH: Ser-22, Tyr-23, His-43, and Lys-117. Sn-glycerol 3-phosphate is bound by residues Lys-117, Gly-146, and Thr-148. Ala-150 contributes to the NADPH binding site. Lys-202, Asp-255, Ser-265, Arg-266, and Asn-267 together coordinate sn-glycerol 3-phosphate. Lys-202 functions as the Proton acceptor in the catalytic mechanism. Arg-266 contacts NADPH. Val-290 and Glu-292 together coordinate NADPH.

Belongs to the NAD-dependent glycerol-3-phosphate dehydrogenase family.

The protein resides in the cytoplasm. The catalysed reaction is sn-glycerol 3-phosphate + NAD(+) = dihydroxyacetone phosphate + NADH + H(+). The enzyme catalyses sn-glycerol 3-phosphate + NADP(+) = dihydroxyacetone phosphate + NADPH + H(+). It functions in the pathway membrane lipid metabolism; glycerophospholipid metabolism. Functionally, catalyzes the reduction of the glycolytic intermediate dihydroxyacetone phosphate (DHAP) to sn-glycerol 3-phosphate (G3P), the key precursor for phospholipid synthesis. This Aliivibrio fischeri (strain ATCC 700601 / ES114) (Vibrio fischeri) protein is Glycerol-3-phosphate dehydrogenase [NAD(P)+].